A 1320-amino-acid chain; its full sequence is Probable inactive ATP-dependent zinc metalloprotease FTSHI 5, chloroplastic (1320 aa).

The N-terminal 43 residues, 1–43, are a transit peptide targeting the chloroplast; that stretch reads MDFISASSLSSPFSTQLSPIYLSSGIVSLKPRHRVKNRNFGSR. 3 helical membrane passes run 571–591, 633–653, and 695–715; these read LYLK…WIPM, NIND…IIPY, and FQWF…LYHV. 824-831 lines the ATP pocket; that stretch reads GERGTGKT.

It in the N-terminal section; belongs to the AAA ATPase family. The protein in the C-terminal section; belongs to the peptidase M41 family. In terms of assembly, oligomer.

The protein localises to the plastid. The protein resides in the chloroplast membrane. Functionally, required for plastid development during embryogenesis. Might be involved in chaperone functions or play a structural role in the thylakoid FtsH complex. The chain is Probable inactive ATP-dependent zinc metalloprotease FTSHI 5, chloroplastic from Arabidopsis thaliana (Mouse-ear cress).